Here is a 546-residue protein sequence, read N- to C-terminus: MDSQRNLLLIALLFVSFMIWQAWQVDNNPQPTAQTTQQTTNTATGDKASQAVPGSGQGQLITVKTDVLSLTINTRGGDIEQANLLAYPDTLGSSNTFELLETTPSFVYQAQSGLTGKNGPDNPANGDRPLFEVPQTSFVLADGQDELRIPLTFTSKDGSVFIKTFVLKRNDYAIGVDYHVNNASAAPLELTLFGQLKQSINLPKKRDTGSNNFALQTYRGAAYSSDETKYKKYSFSDIEDKNLDITTKGGWVAMLQQYFATAWIPAANETNTFYSAELGNGLAAIGFKGAPVVIQPGEQKQLSATLWVGPEIQNKMAEIAPHLDLTVDYGWLWFISQPLFKLLKFIHSFVGNWGFSIIVITFIVRGIMYPLTKAQYTSMAKMRLLQPKLAAMRERIGDDKQRMSQEMMALYKAEKVNPLGGCLPLIIQMPIFLALYYMLMSSVELRHAPFILWIHDLSAQDPYYILPILMGITMYFIQKMSPTTVTDPMQQKIMTFMPVIFTVFFLWFPAGLVLYYIVSNLVTILQQQLIYRGLEKRGLHSREKKK.

Residues 6–26 (NLLLIALLFVSFMIWQAWQVD) traverse the membrane as a helical segment. Positions 30 to 44 (QPTAQTTQQTTNTAT) are enriched in low complexity. The disordered stretch occupies residues 30 to 55 (QPTAQTTQQTTNTATGDKASQAVPGS). Helical transmembrane passes span 344-364 (KFIH…TFIV), 419-439 (LGGC…YYML), 457-477 (LSAQ…MYFI), and 498-518 (PVIF…YYIV).

It belongs to the OXA1/ALB3/YidC family. Type 1 subfamily. Interacts with the Sec translocase complex via SecD. Specifically interacts with transmembrane segments of nascent integral membrane proteins during membrane integration.

The protein resides in the cell inner membrane. Functionally, required for the insertion and/or proper folding and/or complex formation of integral membrane proteins into the membrane. Involved in integration of membrane proteins that insert both dependently and independently of the Sec translocase complex, as well as at least some lipoproteins. Aids folding of multispanning membrane proteins. This is Membrane protein insertase YidC from Yersinia pestis.